The chain runs to 180 residues: Large ribosomal subunit protein eL20 (180 aa).

This sequence belongs to the eukaryotic ribosomal protein eL20 family.

In Caenorhabditis elegans, this protein is Large ribosomal subunit protein eL20.